Consider the following 253-residue polypeptide: Zinc import ATP-binding protein ZnuC (253 aa).

Residues 6–227 enclose the ABC transporter domain; that stretch reads VTLNKISVTF…FGNRGAEQLA (222 aa). 38-45 provides a ligand contact to ATP; it reads GPNGAGKS.

This sequence belongs to the ABC transporter superfamily. Zinc importer (TC 3.A.1.15.5) family. In terms of assembly, the complex is composed of two ATP-binding proteins (ZnuC), two transmembrane proteins (ZnuB) and a solute-binding protein (ZnuA).

The protein localises to the cell inner membrane. It catalyses the reaction Zn(2+)(out) + ATP(in) + H2O(in) = Zn(2+)(in) + ADP(in) + phosphate(in) + H(+)(in). Functionally, part of the ABC transporter complex ZnuABC involved in zinc import. Responsible for energy coupling to the transport system. This Yersinia pestis bv. Antiqua (strain Antiqua) protein is Zinc import ATP-binding protein ZnuC.